Reading from the N-terminus, the 245-residue chain is MANEAYPCPCDIGHRLEYGGLGREVQVEHIKAYVTKSPVDAGKAVIVIQDIFGWQLPNTRYMADMISGNGYTTIVPDFFVGQEPWDPSGDWSIFPEWLKTRNAQKIDREISAILKYLKQQCHAQKIGIVGFCWGGIAVHHLMMKYSEFRAGVSVYGIVKDSEDIYNLKNPTLFIFAENDVVIPLKDVSLLTQKLKEHCKVEYQIKTFSGQTHGFVHRKREDCSPADKPYIDEARRNLIEWLNKYM.

Residue alanine 2 is modified to N-acetylalanine. Residue lysine 36 is modified to N6-acetyllysine. Catalysis depends on residues cysteine 132, aspartate 179, and histidine 212. Serine 223 carries the phosphoserine modification.

It belongs to the dienelactone hydrolase family.

The protein resides in the cytoplasm. Its subcellular location is the cytosol. Cysteine hydrolase. This Pongo abelii (Sumatran orangutan) protein is Carboxymethylenebutenolidase homolog (CMBL).